Reading from the N-terminus, the 58-residue chain is Large ribosomal subunit protein uL30 (58 aa).

Belongs to the universal ribosomal protein uL30 family. As to quaternary structure, part of the 50S ribosomal subunit.

This chain is Large ribosomal subunit protein uL30, found in Wigglesworthia glossinidia brevipalpis.